The chain runs to 292 residues: Protein/nucleic acid deglycase HchA (292 aa).

The segment covering 1–12 (MSQDVNELSKQP) has biased composition (polar residues). Residues 1–23 (MSQDVNELSKQPTPDKAEDNAFF) are disordered. The Nucleophile role is filled by cysteine 190.

It belongs to the peptidase C56 family. HchA subfamily.

It localises to the cytoplasm. It carries out the reaction N(omega)-(1-hydroxy-2-oxopropyl)-L-arginyl-[protein] + H2O = lactate + L-arginyl-[protein] + H(+). It catalyses the reaction N(6)-(1-hydroxy-2-oxopropyl)-L-lysyl-[protein] + H2O = lactate + L-lysyl-[protein] + H(+). The catalysed reaction is S-(1-hydroxy-2-oxopropyl)-L-cysteinyl-[protein] + H2O = lactate + L-cysteinyl-[protein] + H(+). The enzyme catalyses N(omega)-(1-hydroxy-2-oxoethyl)-L-arginyl-[protein] + H2O = L-arginyl-[protein] + glycolate + H(+). It carries out the reaction N(6)-(1-hydroxy-2-oxoethyl)-L-lysyl-[protein] + H2O = glycolate + L-lysyl-[protein] + H(+). It catalyses the reaction S-(1-hydroxy-2-oxoethyl)-L-cysteinyl-[protein] + H2O = glycolate + L-cysteinyl-[protein] + H(+). The catalysed reaction is N(2)-(1-hydroxy-2-oxopropyl)-dGTP + H2O = lactate + dGTP + H(+). The enzyme catalyses N(2)-(1-hydroxy-2-oxopropyl)-GTP + H2O = lactate + GTP + H(+). It carries out the reaction N(2)-(1-hydroxy-2-oxopropyl)-GDP + H2O = lactate + GDP + H(+). It catalyses the reaction N(2)-(1-hydroxy-2-oxopropyl)-GMP + H2O = lactate + GMP + H(+). The catalysed reaction is N(2)-(1-hydroxy-2-oxoethyl)-dGTP + H2O = dGTP + glycolate + H(+). The enzyme catalyses N(2)-(1-hydroxy-2-oxoethyl)-GTP + H2O = glycolate + GTP + H(+). It carries out the reaction N(2)-(1-hydroxy-2-oxoethyl)-GDP + H2O = glycolate + GDP + H(+). It catalyses the reaction N(2)-(1-hydroxy-2-oxoethyl)-GMP + H2O = glycolate + GMP + H(+). The catalysed reaction is an N(2)-(1-hydroxy-2-oxopropyl)-guanosine in RNA + H2O = a guanosine in RNA + lactate + H(+). The enzyme catalyses an N(2)-(1-hydroxy-2-oxopropyl)-2'-deoxyguanosine in DNA + H2O = a 2'-deoxyguanosine in DNA + lactate + H(+). It carries out the reaction an N(2)-(1-hydroxy-2-oxoethyl)-guanosine in RNA + H2O = a guanosine in RNA + glycolate + H(+). It catalyses the reaction an N(2)-(1-hydroxy-2-oxoethyl)-2'-deoxyguanosine in DNA + H2O = a 2'-deoxyguanosine in DNA + glycolate + H(+). Its function is as follows. Protein and nucleotide deglycase that catalyzes the deglycation of the Maillard adducts formed between amino groups of proteins or nucleotides and reactive carbonyl groups of glyoxals. Thus, functions as a protein deglycase that repairs methylglyoxal- and glyoxal-glycated proteins, and releases repaired proteins and lactate or glycolate, respectively. Deglycates cysteine, arginine and lysine residues in proteins, and thus reactivates these proteins by reversing glycation by glyoxals. Acts on early glycation intermediates (hemithioacetals and aminocarbinols), preventing the formation of Schiff bases and advanced glycation endproducts (AGE). Also functions as a nucleotide deglycase able to repair glycated guanine in the free nucleotide pool (GTP, GDP, GMP, dGTP) and in DNA and RNA. Is thus involved in a major nucleotide repair system named guanine glycation repair (GG repair), dedicated to reversing methylglyoxal and glyoxal damage via nucleotide sanitization and direct nucleic acid repair. Plays an important role in protecting cells from carbonyl stress. This is Protein/nucleic acid deglycase HchA from Staphylococcus aureus (strain MSSA476).